The primary structure comprises 282 residues: 1-deoxy-11-beta-hydroxypentalenate dehydrogenase (282 aa).

NAD(+) is bound at residue 12–36 (GAASGIGLALSARFARAGAGVVMAD). Position 144 (Ser-144) interacts with substrate. Tyr-157 functions as the Proton acceptor in the catalytic mechanism. Lys-161 lines the NAD(+) pocket. Positions 258–282 (PPPSPEEELWPVPKTTTATTATTKH) are disordered. Over residues 267-282 (WPVPKTTTATTATTKH) the composition is skewed to low complexity.

The protein belongs to the short-chain dehydrogenases/reductases (SDR) family.

The catalysed reaction is 1-deoxy-11beta-hydroxypentalenate + NAD(+) = 1-deoxy-11-oxopentalenate + NADH + H(+). It participates in antibiotic biosynthesis; pentalenolactone biosynthesis. Catalyzes the oxidation of 1-deoxy-11-beta-hydroxypentalenic acid to 1-deoxy-11-oxopentalenic acid in the biosynthesis of pentalenolactone antibiotic. The protein is 1-deoxy-11-beta-hydroxypentalenate dehydrogenase (pntF) of Streptomyces arenae.